The primary structure comprises 512 residues: Sucrose transport protein SUC5 (512 aa).

The interval 1–27 (MGALEAERAANNATALETQSSPEDLGQ) is disordered. Residues 1-33 (MGALEAERAANNATALETQSSPEDLGQPSPLRK) lie on the Cytoplasmic side of the membrane. A compositionally biased stretch (polar residues) spans 11-22 (NNATALETQSSP). The residue at position 20 (S20) is a Phosphoserine. A helical transmembrane segment spans residues 34–54 (IISVASIAAGVQFGWALQLSL). Over 55–67 (LTPYIQLLGIPHK) the chain is Extracellular. A helical membrane pass occupies residues 68–88 (WSSYMWLCGPISGMIVQPIVG). Over 89-102 (YHSDRCESRFGRRR) the chain is Cytoplasmic. The chain crosses the membrane as a helical span at residues 103–123 (PFIAAGVALVAVSVFLIGFAA). Topologically, residues 124–140 (DMGHSFGDKLENKVRTR) are extracellular. The helical transmembrane segment at 141 to 161 (AIIIFLTGFWFLDVANNTLQG) threads the bilayer. The Cytoplasmic segment spans residues 162 to 179 (PCRAFLADLAAGDAKKTR). Residues 180 to 200 (VANACFSFFMAVGNVLGYAAG) form a helical membrane-spanning segment. Over 201–225 (SYTNLHKMFPFTMTKACDIYCANLK) the chain is Extracellular. A helical membrane pass occupies residues 226–246 (TCFFLSITLLLIVTFSSLWYV). Residues 247-281 (KDKQWSPPQGDKEEKTSSLFFFGEIFGAVRHMKRP) lie on the Cytoplasmic side of the membrane. Residues 282-302 (MVMLLIVTVINWIAWFPFILY) form a helical membrane-spanning segment. Topologically, residues 303–333 (DTDWMGREVYGGNSDGDERSKKLYDQGVQAG) are extracellular. The chain crosses the membrane as a helical span at residues 334–354 (ALGLMFNSILLGFVSLGVESI). Over 355 to 363 (GRKMGGAKR) the chain is Cytoplasmic. A helical membrane pass occupies residues 364–384 (LWGCVNFILAIGLAMTVLVTK). Residues 385–406 (SAEHHREIAGPLAGPSSGIKAG) are Extracellular-facing. The helical transmembrane segment at 407-427 (VFSLFTVLGIPLAITYSIPFA) threads the bilayer. The Cytoplasmic portion of the chain corresponds to 428-440 (LASIFSTNSGAGQ). A helical membrane pass occupies residues 441–461 (GLSLGVLNIAICIPQMIVSFS). Topologically, residues 462–473 (SGPLDAQFGGGN) are extracellular. Residues 474-494 (LPSFVVGAIAAAVSGVLALTV) traverse the membrane as a helical segment. Topologically, residues 495–512 (LPSPPPDAPAMSGAMGFH) are cytoplasmic.

This sequence belongs to the glycoside-pentoside-hexuronide (GPH) cation symporter transporter (TC 2.A.2.4) family. Widely expressed. Expressed in the endosperm and on the epidermis of the outer surface of the cotyledons of torpedo-stage or older embryos.

It localises to the cell membrane. It carries out the reaction sucrose(out) + H(+)(out) = sucrose(in) + H(+)(in). The protein operates within glycan biosynthesis; sucrose metabolism. With respect to regulation, inhibited by protonophores (e.g. carbonyl cyanide m-chlorophenyl-hydrazone (CCCP)) and SH group inhibitors (e.g. p-chloromercuribenzene sulphonic acid (PCMBS)). Functionally, responsible in a heterologous system for the transport of sucrose into the cell, with the concomitant uptake of protons (symport system). Can also transport biotin, and probably maltose at a lesser rate. In planta, the role of SUC5 for the transport of sucrose seems to be negligible. Plays a role in the nutrition of the filial tissues during early seed development and is probably involved in the import of biotin into the endosperm and the embryo epidermis. This Arabidopsis thaliana (Mouse-ear cress) protein is Sucrose transport protein SUC5.